The chain runs to 393 residues: NAD(P)H-quinone oxidoreductase subunit H, chloroplastic (393 aa).

It belongs to the complex I 49 kDa subunit family. As to quaternary structure, NDH is composed of at least 16 different subunits, 5 of which are encoded in the nucleus.

The protein resides in the plastid. It localises to the chloroplast thylakoid membrane. It carries out the reaction a plastoquinone + NADH + (n+1) H(+)(in) = a plastoquinol + NAD(+) + n H(+)(out). The catalysed reaction is a plastoquinone + NADPH + (n+1) H(+)(in) = a plastoquinol + NADP(+) + n H(+)(out). Functionally, NDH shuttles electrons from NAD(P)H:plastoquinone, via FMN and iron-sulfur (Fe-S) centers, to quinones in the photosynthetic chain and possibly in a chloroplast respiratory chain. The immediate electron acceptor for the enzyme in this species is believed to be plastoquinone. Couples the redox reaction to proton translocation, and thus conserves the redox energy in a proton gradient. The polypeptide is NAD(P)H-quinone oxidoreductase subunit H, chloroplastic (Eucalyptus globulus subsp. globulus (Tasmanian blue gum)).